The sequence spans 25 residues: Panurgine R (25 aa).

Intrachain disulfides connect Cys8–Cys23 and Cys11–Cys19.

It is found in the target cell membrane. Its subcellular location is the secreted. Functionally, antimicrobial peptide active against Gram-positive bacteria M.luteus (MIC=0.8 uM) and B.subtilis (MIC=1.5 uM). Less active against Gram-negative bacteria E.coli (MIC=32.5 uM) and yeast C.albicans (MIC=18.7 uM). Not active against S.aureus and P.aeruginosa. Has no hemolytic activity against human erythrocytes. Probably acts by disrupting membranes of target cells. This chain is Panurgine R, found in Panurgus calcaratus (Solitary bee).